The chain runs to 265 residues: MTRIHASAVVDSKAELASDVEVGPFSVIGPNVKIGSGTKVGSHTVIEGHTTIGKENTFAHFAAIGGPPQDMKYRGEPTQLIIGDRNTIREFTTIHTGTSQDLGITRIGNDNWIMAYVHIAHDCQVGNHTIFSSNAQIAGHVQVEDWAIMGGMSGVHQFVRIGQHAMLGGASALVQDIPPFVIAAGDKASPHGINVEGLKRRGFSSETVTALRQAYKVLYKDGLSFEDAKVEIQKMVAASSGDQATADKLAQFHDFIAASTRGIIR.

It belongs to the transferase hexapeptide repeat family. LpxA subfamily. Homotrimer.

It localises to the cytoplasm. The enzyme catalyses a (3R)-hydroxyacyl-[ACP] + UDP-N-acetyl-alpha-D-glucosamine = a UDP-3-O-[(3R)-3-hydroxyacyl]-N-acetyl-alpha-D-glucosamine + holo-[ACP]. The protein operates within glycolipid biosynthesis; lipid IV(A) biosynthesis; lipid IV(A) from (3R)-3-hydroxytetradecanoyl-[acyl-carrier-protein] and UDP-N-acetyl-alpha-D-glucosamine: step 1/6. Functionally, involved in the biosynthesis of lipid A, a phosphorylated glycolipid that anchors the lipopolysaccharide to the outer membrane of the cell. This chain is Acyl-[acyl-carrier-protein]--UDP-N-acetylglucosamine O-acyltransferase, found in Polynucleobacter asymbioticus (strain DSM 18221 / CIP 109841 / QLW-P1DMWA-1) (Polynucleobacter necessarius subsp. asymbioticus).